A 129-amino-acid polypeptide reads, in one-letter code: Ferredoxin-1 (129 aa).

In terms of domain architecture, 2Fe-2S ferredoxin-type spans S29–H120. The [2Fe-2S] cluster site is built by C64, C69, C72, and C103.

Belongs to the 2Fe2S plant-type ferredoxin family. Requires [2Fe-2S] cluster as cofactor.

Ferredoxins are iron-sulfur proteins that transfer electrons in a wide variety of metabolic reactions. The chain is Ferredoxin-1 (fer1) from Haloarcula marismortui (strain ATCC 43049 / DSM 3752 / JCM 8966 / VKM B-1809) (Halobacterium marismortui).